Reading from the N-terminus, the 495-residue chain is Trigger factor (495 aa).

In terms of domain architecture, PPIase FKBP-type spans 169–254 (GDRVTIDYLG…VKEVAAPGEV (86 aa)). The tract at residues 439-495 (ALLADDESEDKPAAKKAAPKKKAAKAEATEAAAEGEEAAVPKKKAAPKKKAAEDSAE) is disordered.

The protein belongs to the FKBP-type PPIase family. Tig subfamily.

Its subcellular location is the cytoplasm. The enzyme catalyses [protein]-peptidylproline (omega=180) = [protein]-peptidylproline (omega=0). Its function is as follows. Involved in protein export. Acts as a chaperone by maintaining the newly synthesized protein in an open conformation. Functions as a peptidyl-prolyl cis-trans isomerase. The chain is Trigger factor from Rhizobium rhizogenes (strain K84 / ATCC BAA-868) (Agrobacterium radiobacter).